We begin with the raw amino-acid sequence, 238 residues long: Uridylate kinase (238 aa).

ATP is bound at residue 12–15 (KLSG). A UMP-binding site is contributed by Gly54. Positions 55 and 59 each coordinate ATP. UMP-binding positions include Asp74 and 135–142 (TGNPYFTT). ATP contacts are provided by Thr162, Asn163, Tyr168, and Asp171.

It belongs to the UMP kinase family. As to quaternary structure, homohexamer.

The protein localises to the cytoplasm. It catalyses the reaction UMP + ATP = UDP + ADP. It participates in pyrimidine metabolism; CTP biosynthesis via de novo pathway; UDP from UMP (UMPK route): step 1/1. Inhibited by UTP. Functionally, catalyzes the reversible phosphorylation of UMP to UDP. The sequence is that of Uridylate kinase from Bradyrhizobium sp. (strain ORS 278).